The chain runs to 242 residues: UPF0157 protein PA4798 (242 aa).

The tract at residues 215-242 (AGAESTPGGPADTAYFESLRSRVSKPQD) is disordered.

It belongs to the UPF0157 (GrpB) family.

The polypeptide is UPF0157 protein PA4798 (Pseudomonas aeruginosa (strain ATCC 15692 / DSM 22644 / CIP 104116 / JCM 14847 / LMG 12228 / 1C / PRS 101 / PAO1)).